A 337-amino-acid chain; its full sequence is Large ribosomal subunit protein uL3 (337 aa).

The tract at residues 1-20 (MASIHRPKRGSLAFSPRKRA) is disordered.

Belongs to the universal ribosomal protein uL3 family. As to quaternary structure, part of the 50S ribosomal subunit. Forms a cluster with proteins L14 and L24e.

Functionally, one of the primary rRNA binding proteins, it binds directly near the 3'-end of the 23S rRNA, where it nucleates assembly of the 50S subunit. The chain is Large ribosomal subunit protein uL3 from Methanosarcina acetivorans (strain ATCC 35395 / DSM 2834 / JCM 12185 / C2A).